Consider the following 576-residue polypeptide: Alpha-bisabolol synthase (576 aa).

Residues Arg-286, Asp-323, Asp-327, Arg-466, and Asn-469 each coordinate (2E,6E)-farnesyl diphosphate. The Mg(2+) site is built by Asp-323 and Asp-327. The short motif at 323–327 (DDVYD) is the DDXXD motif element. Residues Asn-469, Thr-473, and Glu-477 each contribute to the Mg(2+) site.

Belongs to the terpene synthase family. Tpsb subfamily. It depends on Mg(2+) as a cofactor. Mn(2+) serves as cofactor.

Produces a mixture of beta-bisabolene and alpha-bisabolol, along with traces of alpha-bisabolene and farnesene isomers from (2E,6E)-farnesyl diphosphate in fragrance biosynthesis. This chain is Alpha-bisabolol synthase, found in Santalum spicatum (Australian sandalwood).